A 306-amino-acid polypeptide reads, in one-letter code: GTPase IMAP family member 1 (306 aa).

The disordered stretch occupies residues 1–21 (MGGRKMATDEENVYGLEENAQ). Residues 1 to 272 (MGGRKMATDE…RLWKWLKSPR (272 aa)) are Cytoplasmic-facing. In terms of domain architecture, AIG1-type G spans 25-229 (ESTRRLILVG…YSNEVYELAQ (205 aa)). A G1 region spans residues 34–41 (GRTGAGKS). Residues 34–42 (GRTGAGKSA) and Ser-55 each bind GTP. Residues 61 to 65 (SVTRA) form a G2 region. A G3 region spans residues 82 to 85 (DTPD). A G4 region spans residues 152-155 (TRKE). GTP contacts are provided by residues 153–155 (RKE) and Asn-190. The interval 189 to 191 (DNR) is G5. The helical; Anchor for type IV membrane protein transmembrane segment at 273–292 (SWRLGLALLLGGALLFWVLL) threads the bilayer. The Lumenal segment spans residues 293–306 (HRRWSEAVAEVGPD).

The protein belongs to the TRAFAC class TrmE-Era-EngA-EngB-Septin-like GTPase superfamily. AIG1/Toc34/Toc159-like paraseptin GTPase family. IAN subfamily. In terms of tissue distribution, predominantly expressed in the spleen and to a lesser extent in the lymph nodes. Detected in T-cells.

The protein localises to the endoplasmic reticulum membrane. Its subcellular location is the golgi apparatus membrane. In terms of biological role, may regulate lymphocyte survival. Required for normal levels of mature T-lymphocytes and mature B-cells. This Homo sapiens (Human) protein is GTPase IMAP family member 1 (GIMAP1).